Consider the following 216-residue polypeptide: Ribosomal RNA small subunit methyltransferase G (216 aa).

S-adenosyl-L-methionine-binding positions include Gly83, Met88, 134-135 (VE), and Arg149.

This sequence belongs to the methyltransferase superfamily. RNA methyltransferase RsmG family.

The protein resides in the cytoplasm. It catalyses the reaction guanosine(527) in 16S rRNA + S-adenosyl-L-methionine = N(7)-methylguanosine(527) in 16S rRNA + S-adenosyl-L-homocysteine. In terms of biological role, specifically methylates the N7 position of guanine in position 527 of 16S rRNA. This chain is Ribosomal RNA small subunit methyltransferase G, found in Pseudomonas putida (strain ATCC 700007 / DSM 6899 / JCM 31910 / BCRC 17059 / LMG 24140 / F1).